A 359-amino-acid chain; its full sequence is 3-dehydroquinate synthase (359 aa).

NAD(+) is bound by residues 71–76, 105–109, 129–130, lysine 142, lysine 151, and 169–172; these read DGEQYK, GVIGD, TT, and CLST. Residues glutamate 184, histidine 247, and histidine 264 each coordinate Zn(2+).

This sequence belongs to the sugar phosphate cyclases superfamily. Dehydroquinate synthase family. It depends on Co(2+) as a cofactor. Zn(2+) serves as cofactor. NAD(+) is required as a cofactor.

The protein localises to the cytoplasm. It catalyses the reaction 7-phospho-2-dehydro-3-deoxy-D-arabino-heptonate = 3-dehydroquinate + phosphate. Its pathway is metabolic intermediate biosynthesis; chorismate biosynthesis; chorismate from D-erythrose 4-phosphate and phosphoenolpyruvate: step 2/7. In terms of biological role, catalyzes the conversion of 3-deoxy-D-arabino-heptulosonate 7-phosphate (DAHP) to dehydroquinate (DHQ). In Shewanella halifaxensis (strain HAW-EB4), this protein is 3-dehydroquinate synthase.